A 435-amino-acid chain; its full sequence is 5-methylthioadenosine/S-adenosylhomocysteine deaminase (435 aa).

Zn(2+) contacts are provided by H65 and H67. Residues E94, R150, and H189 each contribute to the substrate site. H216 is a Zn(2+) binding site. Residues E219 and D304 each coordinate substrate. D304 serves as a coordination point for Zn(2+).

It belongs to the metallo-dependent hydrolases superfamily. MTA/SAH deaminase family. Zn(2+) is required as a cofactor.

The catalysed reaction is S-adenosyl-L-homocysteine + H2O + H(+) = S-inosyl-L-homocysteine + NH4(+). The enzyme catalyses S-methyl-5'-thioadenosine + H2O + H(+) = S-methyl-5'-thioinosine + NH4(+). Functionally, catalyzes the deamination of 5-methylthioadenosine and S-adenosyl-L-homocysteine into 5-methylthioinosine and S-inosyl-L-homocysteine, respectively. Is also able to deaminate adenosine. This Bacillus cereus (strain 03BB102) protein is 5-methylthioadenosine/S-adenosylhomocysteine deaminase.